The following is a 183-amino-acid chain: BLOC-1-related complex subunit 8 homolog (183 aa).

Residues Met-152–His-183 form a disordered region. Over residues Thr-159–His-183 the composition is skewed to polar residues.

Belongs to the BORCS8 family.

Its subcellular location is the lysosome membrane. Functionally, may participate in the coupling of lysosomes to microtubule plus-end-directed kinesin motor. The protein is BLOC-1-related complex subunit 8 homolog of Drosophila melanogaster (Fruit fly).